The chain runs to 1163 residues: E3 ubiquitin-protein ligase TRIM33 (1163 aa).

A disordered region spans residues 1–119; it reads MEVEASGTED…ASTSSSSSTP (119 aa). Over residues 27–38 the composition is skewed to basic and acidic residues; sequence TETKEAADEAKS. The segment covering 45-54 has biased composition (low complexity); sequence TPTTSSDSSS. Residues 72–87 are compositionally biased toward pro residues; the sequence is DPPPPPPPPPPPPPST. The span at 88–99 shows a compositional bias: low complexity; that stretch reads PADSTAAAASPA. The RING-type zinc-finger motif lies at 129 to 188; sequence CAVCKQSLQNRDCEPKLLPCLHSFCLKCIPQPDRKITMPVQGPHGQDTRIVNVMRCTVCH. Residues 215-268 form a B box-type 1; atypical zinc finger; it reads NSTQVCTSCEDNASAIGFCVECGEWLCKTCIEAHQRVKFTKDHKIRKKEEVSPE. Zn(2+) contacts are provided by Cys220, Cys223, Cys244, His257, Cys280, His283, Cys303, and His308. The segment at 275 to 316 adopts a B box-type 2 zinc-finger fold; the sequence is QRPVFCPVHKQEALKLFCETCDTLTCRDCQLLEHKEHRYQFL. Residues 345 to 369 adopt a coiled-coil conformation; it reads ASEVQKRLKEVAETHKKVEHEIKIA. Low complexity predominate over residues 524 to 533; that stretch reads MQQAAIAQKH. 5 disordered regions span residues 524–555, 575–599, 656–706, 753–848, and 867–918; these read MQQA…QQQQ, QIQQ…QMIQ, LQRQ…VITP, TVGP…PLPI, and NVKS…KEDD. A compositionally biased stretch (basic residues) spans 534–548; sequence QQQHQHHQQQQHQHQ. The segment covering 580 to 590 has biased composition (polar residues); that stretch reads MRIASQMSQHP. 2 stretches are compositionally biased toward low complexity: residues 678–691 and 753–797; these read SAAN…ASMA and TVGP…SGTT. Positions 821–830 are enriched in basic and acidic residues; sequence KTERTKDGRR. A compositionally biased stretch (polar residues) spans 870–889; that stretch reads SEPQSDNLSSCTNPNSRATL. The PHD-type zinc finger occupies 921–968; that stretch reads EDWCAVCQNGGELLCCDHCPKVFHITCHIPTLKSSPSGDWMCTFCRNL. The 124-residue stretch at 991-1114 folds into the Bromo domain; sequence AMSPEEQRRC…LYFEERLLEI (124 aa). The segment at 1128 to 1147 is disordered; the sequence is TQIEAEKEDSDDSDDDIIQP. Residues 1133–1144 are compositionally biased toward acidic residues; the sequence is EKEDSDDSDDDI.

It is found in the nucleus. The catalysed reaction is S-ubiquitinyl-[E2 ubiquitin-conjugating enzyme]-L-cysteine + [acceptor protein]-L-lysine = [E2 ubiquitin-conjugating enzyme]-L-cysteine + N(6)-ubiquitinyl-[acceptor protein]-L-lysine.. The protein operates within protein modification; protein ubiquitination. May act as an E3 ubiquitin-protein ligase and a transcriptional repressor. Involved in the regulation of embryonic and adult hematopoiesis. Required for normal development and survival of both committed erythroid progenitor cells and posterior mesenchymal cells. This chain is E3 ubiquitin-protein ligase TRIM33 (trim33), found in Danio rerio (Zebrafish).